The following is a 361-amino-acid chain: Peptide chain release factor 1 (361 aa).

Gln-237 is subject to N5-methylglutamine. Basic and acidic residues predominate over residues 286 to 296; sequence EKRRSAEESTR. Positions 286–305 are disordered; sequence EKRRSAEESTRRNLVSSGDR.

The protein belongs to the prokaryotic/mitochondrial release factor family. Methylated by PrmC. Methylation increases the termination efficiency of RF1.

It localises to the cytoplasm. Its function is as follows. Peptide chain release factor 1 directs the termination of translation in response to the peptide chain termination codons UAG and UAA. This Shewanella pealeana (strain ATCC 700345 / ANG-SQ1) protein is Peptide chain release factor 1.